The following is a 94-amino-acid chain: Signal peptidase complex subunit 1 (94 aa).

Position 2 is an N-acetylserine (serine 2). The Cytoplasmic portion of the chain corresponds to 2 to 28; that stretch reads SEILQDVQRKLVFPIDFPSQRKTEKFQ. Residues 29–49 form a helical membrane-spanning segment; that stretch reads QLSLMIGALVACILGFAQQSL. Residue lysine 50 is a topological domain, lumenal. Residues 51–71 form a helical membrane-spanning segment; the sequence is VLLTAYGISCVITLICVLPAY. Residues 72–94 are Cytoplasmic-facing; sequence PWYNKQKLRWAQPKIEINVDQYD.

This sequence belongs to the SPCS1 family. In terms of assembly, component of the signal peptidase complex (SPC) composed of a catalytic subunit SEC11 and three accessory subunits SPC1, SPC2 and SPC3. The complex induces a local thinning of the ER membrane which is used to measure the length of the signal peptide (SP) h-region of protein substrates. This ensures the selectivity of the complex towards h-regions shorter than 18-20 amino acids. SPC associates with the translocon complex. Interacts with SBH1 and SEB2/SBH2.

It is found in the endoplasmic reticulum membrane. Functionally, component of the signal peptidase complex (SPC) which catalyzes the cleavage of N-terminal signal sequences from nascent proteins as they are translocated into the lumen of the endoplasmic reticulum. Dispensable for SPC enzymatic activity. The sequence is that of Signal peptidase complex subunit 1 (SPC1) from Saccharomyces cerevisiae (strain ATCC 204508 / S288c) (Baker's yeast).